An 853-amino-acid chain; its full sequence is DNA mismatch repair protein MutS (853 aa).

ATP is bound at residue 614-621 (GPNMGGKS).

The protein belongs to the DNA mismatch repair MutS family.

Its function is as follows. This protein is involved in the repair of mismatches in DNA. It is possible that it carries out the mismatch recognition step. This protein has a weak ATPase activity. This is DNA mismatch repair protein MutS from Escherichia coli (strain K12 / MC4100 / BW2952).